We begin with the raw amino-acid sequence, 98 residues long: NADH-ubiquinone oxidoreductase chain 4L (98 aa).

The next 3 membrane-spanning stretches (helical) occupy residues 1 to 21 (MTLI…GLLM), 29 to 49 (ALLC…LTIL), and 61 to 81 (IILL…LVMV).

Belongs to the complex I subunit 4L family. In terms of assembly, core subunit of respiratory chain NADH dehydrogenase (Complex I) which is composed of 45 different subunits.

Its subcellular location is the mitochondrion inner membrane. The enzyme catalyses a ubiquinone + NADH + 5 H(+)(in) = a ubiquinol + NAD(+) + 4 H(+)(out). In terms of biological role, core subunit of the mitochondrial membrane respiratory chain NADH dehydrogenase (Complex I) which catalyzes electron transfer from NADH through the respiratory chain, using ubiquinone as an electron acceptor. Part of the enzyme membrane arm which is embedded in the lipid bilayer and involved in proton translocation. The sequence is that of NADH-ubiquinone oxidoreductase chain 4L (MT-ND4L) from Balaenoptera physalus (Fin whale).